The chain runs to 102 residues: Small ribosomal subunit protein uS10 (102 aa).

The protein belongs to the universal ribosomal protein uS10 family. In terms of assembly, part of the 30S ribosomal subunit.

Its function is as follows. Involved in the binding of tRNA to the ribosomes. This Nitrosomonas eutropha (strain DSM 101675 / C91 / Nm57) protein is Small ribosomal subunit protein uS10.